The primary structure comprises 383 residues: MDALEITQKLISYPTITPKECGIFEYIKSLFPTFKTLECGENGVKNLFLYRIFNPPKEHTEEKHAKESVKPLHFCFAGHIDVVPPGNHWQSDPFKPIIKEGFLYGRGAQDMKGGVGAFLSASLNFNPKTPFMLSVLLTSDEEGPGIFGTRLMLEKLKEKDLLPHMAIVAEPTCEKILGDSIKIGRRGSINGKLILKGTQGHVAYPQKCQNPIDALASVLPLISGVHLDDGDEYFDPSKLVITNLHAGLGANNVTPASVEIIFNARHSLKTTKESLKEYLEKVLKNAPHTLELESSSSPFITASHSKLASVLKENILKTCHTTPLLNTKGGTSDARFFSAHGIEVVEFGVINDRIHAIDERVSLKELELLEKVFLGVLENLSEK.

His79 provides a ligand contact to Zn(2+). Asp81 is an active-site residue. Asp110 provides a ligand contact to Zn(2+). Catalysis depends on Glu141, which acts as the Proton acceptor. Zn(2+) contacts are provided by Glu142, Glu170, and His355.

It belongs to the peptidase M20A family. DapE subfamily. As to quaternary structure, homodimer. Zn(2+) is required as a cofactor. It depends on Co(2+) as a cofactor.

The catalysed reaction is N-succinyl-(2S,6S)-2,6-diaminopimelate + H2O = (2S,6S)-2,6-diaminopimelate + succinate. It participates in amino-acid biosynthesis; L-lysine biosynthesis via DAP pathway; LL-2,6-diaminopimelate from (S)-tetrahydrodipicolinate (succinylase route): step 3/3. Catalyzes the hydrolysis of N-succinyl-L,L-diaminopimelic acid (SDAP), forming succinate and LL-2,6-diaminopimelate (DAP), an intermediate involved in the bacterial biosynthesis of lysine and meso-diaminopimelic acid, an essential component of bacterial cell walls. The polypeptide is Succinyl-diaminopimelate desuccinylase (Helicobacter pylori (strain Shi470)).